Consider the following 598-residue polypeptide: uncharacterized protein (598 aa).

The span at 1–23 (MSHEGSRQARDRGVTRSKAEKAR) shows a compositional bias: basic and acidic residues. Disordered regions lie at residues 1-32 (MSHEGSRQARDRGVTRSKAEKARPPTQPVPQV), 151-190 (FHNEEPGNPDQFLLGSSWDKESQKPTQPSEPSAEPKVTPR), and 222-241 (PSKESLRSTAEGERVYSPQS). The segment covering 225–235 (ESLRSTAEGER) has biased composition (basic and acidic residues). Residues S238 and S242 each carry the phosphoserine modification. Disordered stretches follow at residues 366–396 (RRSQAGTATSACESQALSSRAPSKPHVSSPR) and 551–571 (AEEGTPQAPEQQPIQTGVSKP). Polar residues-rich tracts occupy residues 369–386 (QAGTATSACESQALSSRA) and 558–569 (APEQQPIQTGVS).

This is an uncharacterized protein from Mus musculus (Mouse).